Here is a 588-residue protein sequence, read N- to C-terminus: Myc box-dependent-interacting protein 1 (588 aa).

At A2 the chain carries N-acetylalanine. The interval 2 to 122 (AEMGSKGVTA…DYHQKLVDQA (121 aa)) is interaction with BIN2. Coiled coils occupy residues 15-42 (ASNV…TKDE) and 193-274 (HLVA…EKQH). One can recognise a BAR domain in the interval 29-276 (VLQKLGKADE…LVSLEKQHGS (248 aa)). The segment at 279 to 355 (FTVKAQPSDN…PKHTPSKEMK (77 aa)) is disordered. A phosphoserine mark is found at S296, S298, and S304. T308 is modified (phosphothreonine). Residues S324 and S332 each carry the phosphoserine modification. The interval 379–422 (FEAPGPFSEQASLLDLDFEPLPPVASPVKAPTPSGQSIPWDLWE) is clathrin-binding. Residues 448-484 (PSQTAEPGPAQPAEASEVVGGAQEPGETAASEATSSS) are disordered. Residues 474-484 (ETAASEATSSS) are compositionally biased toward low complexity. One can recognise an SH3 domain in the interval 515–588 (GFMFKVQAQH…FPENFTERVQ (74 aa)).

Heterodimer with AMPH. Binds SH3GLB1. Interacts (via SH3 domain) with DNM1. Interacts with SYNJ1. Interacts (via SH3 domain) with DNM2. Interacts with CLTC. Interacts with AP2A2. Interacts with AP2B1. Interacts with MYC (via N-terminal transactivation domain); the interaction requires the integrity of the conserved MYC box regions 1 and 2. Interacts with BIN2. Interacts with SNX4. Interacts (via BAR domain) with BACE1. Binds (via BAR domain) F-actin. Phosphorylated by protein kinase C. As to expression, isoform 1 is expressed mainly in the brain. Isoform 2 is widely expressed.

It is found in the nucleus. The protein resides in the cytoplasm. Its subcellular location is the endosome. It localises to the cell membrane. The protein localises to the sarcolemma. It is found in the T-tubule. In terms of biological role, is a key player in the control of plasma membrane curvature, and membrane shaping and remodeling. Required in muscle cells for the formation of T-tubules, tubular invaginations of the plasma membrane that function in depolarization-contraction coupling. Required in muscle cells for the formation of T-tubules, tubular invaginations of the plasma membrane that function in depolarization-contraction coupling. Is a negative regulator of endocytosis. Is also involved in the regulation of intracellular vesicles sorting, modulation of BACE1 trafficking and the control of amyloid-beta production. In neuronal circuits, endocytosis regulation may influence the internalization of PHF-tau aggregates. May be involved in the regulation of MYC activity and the control cell proliferation. This is Myc box-dependent-interacting protein 1 (Bin1) from Mus musculus (Mouse).